Consider the following 208-residue polypeptide: Uracil phosphoribosyltransferase (208 aa).

Residues R78, R103, and 130–138 (DPMLATGGS) each bind 5-phospho-alpha-D-ribose 1-diphosphate. Uracil contacts are provided by residues I193 and 198 to 200 (GDA). 5-phospho-alpha-D-ribose 1-diphosphate is bound at residue D199.

This sequence belongs to the UPRTase family. It depends on Mg(2+) as a cofactor.

It catalyses the reaction UMP + diphosphate = 5-phospho-alpha-D-ribose 1-diphosphate + uracil. Its pathway is pyrimidine metabolism; UMP biosynthesis via salvage pathway; UMP from uracil: step 1/1. Its activity is regulated as follows. Allosterically activated by GTP. Catalyzes the conversion of uracil and 5-phospho-alpha-D-ribose 1-diphosphate (PRPP) to UMP and diphosphate. In Roseiflexus sp. (strain RS-1), this protein is Uracil phosphoribosyltransferase.